The primary structure comprises 164 residues: Ferredoxin-type protein NapF (164 aa).

4Fe-4S ferredoxin-type domains follow at residues 28 to 57 (GDES…RGAG), 58 to 89 (GYPS…PRHT), and 132 to 161 (YQPQ…AEYL). [4Fe-4S] cluster-binding residues include cysteine 37, cysteine 40, cysteine 43, cysteine 47, cysteine 69, cysteine 72, cysteine 75, cysteine 79, cysteine 141, cysteine 144, cysteine 147, and cysteine 151.

It belongs to the NapF family. Interacts with the cytoplasmic NapA precursor. The cofactor is [4Fe-4S] cluster.

Its subcellular location is the cytoplasm. Could be involved in the maturation of NapA, the catalytic subunit of the periplasmic nitrate reductase, before its export into the periplasm. The sequence is that of Ferredoxin-type protein NapF from Escherichia coli O157:H7.